A 377-amino-acid chain; its full sequence is D-alanine--D-alanine ligase (377 aa).

Residues 140 to 349 enclose the ATP-grasp domain; the sequence is KELLTVNGIR…NAKLVDMLID (210 aa). Position 170 to 225 (170 to 225) interacts with ATP; sequence VAELGNIVFVKAANQGSSVGISRVTNAEEYTEALSDSFQYDYKVLIEEAVNGAREL. Residues aspartate 303, glutamate 316, and asparagine 318 each coordinate Mg(2+).

This sequence belongs to the D-alanine--D-alanine ligase family. Requires Mg(2+) as cofactor. The cofactor is Mn(2+).

It localises to the cytoplasm. The catalysed reaction is 2 D-alanine + ATP = D-alanyl-D-alanine + ADP + phosphate + H(+). It functions in the pathway cell wall biogenesis; peptidoglycan biosynthesis. In terms of biological role, cell wall formation. This chain is D-alanine--D-alanine ligase, found in Leuconostoc mesenteroides.